The following is a 500-amino-acid chain: MEKFQRLDRSHYFLYPLIFQEYIYVLAHDHGLNGSILLENAGYDNKSSLLIVKRLIIRMYQQNHLILSVNDSKQTAFLGHNKNFYSQVMSEVSSTIMEIPLSLRLISSLERKGVVKSDNLRSIHSIFSFLEDNFSHLNYVLDILIPYPAHLEILVQALRYWIKDASSLHLLRFFLHECHNWDSLITSNSKKASSFFSKRNHRLFFFLYTSYVCEYESGFLFLRNQSSHLRSTSSGALIERIYFYGKIEHLAEVFARTFQANLWFFKDSFMHYVRYQGKSILASKGTFLLMNKRKDYFFNFWKSYFYLWSYPGRISINQLSNHSLDFLGYRSSVRLKPSMVRGQMLENTFLINNAIKKFDSIVPIMPLVGSLAKSKFCNALGHPIGKAIWADLSDSDIIERFGRIYRNLSHYHSGSSKKKSLYRVKYILRLSCARTLARKHKSTVRAFLKRFGSQLLEEFFTEEEQVFSLTFPRVSSISRRLSRRRIWYLDIVCINDLANH.

The protein belongs to the intron maturase 2 family. MatK subfamily.

It is found in the plastid. The protein resides in the chloroplast. Its function is as follows. Usually encoded in the trnK tRNA gene intron. Probably assists in splicing its own and other chloroplast group II introns. In Helianthus annuus (Common sunflower), this protein is Maturase K.